The primary structure comprises 118 residues: Small ribosomal subunit protein uS13 (118 aa).

The protein belongs to the universal ribosomal protein uS13 family. As to quaternary structure, part of the 30S ribosomal subunit. Forms a loose heterodimer with protein S19. Forms two bridges to the 50S subunit in the 70S ribosome.

In terms of biological role, located at the top of the head of the 30S subunit, it contacts several helices of the 16S rRNA. In the 70S ribosome it contacts the 23S rRNA (bridge B1a) and protein L5 of the 50S subunit (bridge B1b), connecting the 2 subunits; these bridges are implicated in subunit movement. Contacts the tRNAs in the A and P-sites. The chain is Small ribosomal subunit protein uS13 from Carsonella ruddii (strain PV).